Reading from the N-terminus, the 668-residue chain is DNA ligase (668 aa).

Residues 34–38 (DTEYD), 83–84 (SL), and E114 each bind NAD(+). The N6-AMP-lysine intermediate role is filled by K116. R137, E171, K286, and K310 together coordinate NAD(+). Residues C404, C407, C422, and C427 each contribute to the Zn(2+) site. The BRCT domain occupies 588 to 668 (NSDSIIANKT…FFDLLKSEKG (81 aa)).

Belongs to the NAD-dependent DNA ligase family. LigA subfamily. Mg(2+) serves as cofactor. Requires Mn(2+) as cofactor.

It catalyses the reaction NAD(+) + (deoxyribonucleotide)n-3'-hydroxyl + 5'-phospho-(deoxyribonucleotide)m = (deoxyribonucleotide)n+m + AMP + beta-nicotinamide D-nucleotide.. DNA ligase that catalyzes the formation of phosphodiester linkages between 5'-phosphoryl and 3'-hydroxyl groups in double-stranded DNA using NAD as a coenzyme and as the energy source for the reaction. It is essential for DNA replication and repair of damaged DNA. The polypeptide is DNA ligase (Mycoplasma capricolum subsp. capricolum (strain California kid / ATCC 27343 / NCTC 10154)).